A 492-amino-acid chain; its full sequence is 3-octaprenyl-4-hydroxybenzoate carboxy-lyase (492 aa).

Asn-175 provides a ligand contact to Mn(2+). Prenylated FMN is bound by residues Ile-178 to Arg-180, Arg-192 to Leu-194, and Arg-197 to Gly-198. Glu-241 provides a ligand contact to Mn(2+). Asp-290 (proton donor) is an active-site residue.

The protein belongs to the UbiD family. As to quaternary structure, homohexamer. Requires prenylated FMN as cofactor. It depends on Mn(2+) as a cofactor.

It localises to the cell membrane. The enzyme catalyses a 4-hydroxy-3-(all-trans-polyprenyl)benzoate + H(+) = a 2-(all-trans-polyprenyl)phenol + CO2. Its pathway is cofactor biosynthesis; ubiquinone biosynthesis. Functionally, catalyzes the decarboxylation of 3-octaprenyl-4-hydroxy benzoate to 2-octaprenylphenol, an intermediate step in ubiquinone biosynthesis. This Salmonella typhi protein is 3-octaprenyl-4-hydroxybenzoate carboxy-lyase.